Reading from the N-terminus, the 535-residue chain is MEILRFLLSLFIYFLLLNLSLSHFPSISAQRTNHENFLKCLSHRINEDDSRIIHTSKDPSYFSILNSSIQNPRFFVLETPKPVSIITPVQATDVQSTIKCARLHGIHIRTRSGGHDYEGLSYMAKSRPFVVIDLRNLRSITLDVDNRTGWVQSGATIGELYYEIGKLSKSLAFPAGLYPTVGIGGQFGGGGYGTLMRKYGLSADNVIDAHIVDANGSFLDRQGMGEDFFWAIRGGGGSSFSVVLSWKIRLLDVPSVVTVFKVVKTSEKEAVSIINKWQYIADKVPNDLFIRAMLQKETEVYASFPGLYLGPVSDLLALMKDKFPELGLEIGNCREMSWIESVLWFIKGESMEILAKRKRTSRSFKGKDDFIEEPIPKTAIQYLWRRFEAPEARLAKIILTPFGGKMSEIADNEIPFPHREGNLYEIQYLAYWSEEEDKNKTNTEKYLRWVESVYEFMTPYVSKSPRRAYVNFRDIDLGMYLGLNMKTKYEEAKVWGVKYFKNNFDRLVRVKTNVDPMDFFCDEQSIPIMKYVNDI.

An N-terminal signal peptide occupies residues 1 to 22 (MEILRFLLSLFIYFLLLNLSLS). Residues asparagine 18 and asparagine 66 are each glycosylated (N-linked (GlcNAc...) asparagine). A disulfide bridge links cysteine 40 with cysteine 100. Residues 78 to 253 (ETPKPVSIIT…LSWKIRLLDV (176 aa)) form the FAD-binding PCMH-type domain. Histidine 115 bears the Pros-8alpha-FAD histidine mark. Asparagine 146, asparagine 215, and asparagine 439 each carry an N-linked (GlcNAc...) asparagine glycan.

This sequence belongs to the oxygen-dependent FAD-linked oxidoreductase family. It depends on FAD as a cofactor. In terms of tissue distribution, accumulates in cell walls of etiolated hypocotyls.

It localises to the secreted. The protein localises to the cell wall. In Arabidopsis thaliana (Mouse-ear cress), this protein is Berberine bridge enzyme-like 27.